A 272-amino-acid polypeptide reads, in one-letter code: D-aminoacyl-tRNA deacylase (272 aa).

This sequence belongs to the DtdA deacylase family. Monomer. It depends on Zn(2+) as a cofactor.

It catalyses the reaction a D-aminoacyl-tRNA + H2O = a tRNA + a D-alpha-amino acid + H(+). It carries out the reaction glycyl-tRNA(Ala) + H2O = tRNA(Ala) + glycine + H(+). Functionally, D-aminoacyl-tRNA deacylase with broad substrate specificity. By recycling D-aminoacyl-tRNA to D-amino acids and free tRNA molecules, this enzyme counteracts the toxicity associated with the formation of D-aminoacyl-tRNA entities in vivo. This chain is D-aminoacyl-tRNA deacylase, found in Thermococcus onnurineus (strain NA1).